The primary structure comprises 315 residues: N-acetyl-gamma-glutamyl-phosphate reductase (315 aa).

Cys-117 is a catalytic residue.

This sequence belongs to the NAGSA dehydrogenase family. Type 2 subfamily.

The protein localises to the cytoplasm. The enzyme catalyses N-acetyl-L-glutamate 5-semialdehyde + phosphate + NADP(+) = N-acetyl-L-glutamyl 5-phosphate + NADPH + H(+). It functions in the pathway amino-acid biosynthesis; L-arginine biosynthesis; N(2)-acetyl-L-ornithine from L-glutamate: step 3/4. Functionally, catalyzes the NADPH-dependent reduction of N-acetyl-5-glutamyl phosphate to yield N-acetyl-L-glutamate 5-semialdehyde. The sequence is that of N-acetyl-gamma-glutamyl-phosphate reductase from Burkholderia lata (strain ATCC 17760 / DSM 23089 / LMG 22485 / NCIMB 9086 / R18194 / 383).